The following is a 251-amino-acid chain: Pyruvate formate-lyase-activating enzyme (251 aa).

A Radical SAM core domain is found at 15–244 (VDGPGLRYIL…KEAYRYVNFN (230 aa)). Positions 29, 33, and 36 each coordinate [4Fe-4S] cluster. S-adenosyl-L-methionine contacts are provided by residues 35–37 (YCH), glycine 79, 134–136 (DIK), and histidine 207.

Belongs to the organic radical-activating enzymes family. [4Fe-4S] cluster serves as cofactor.

The protein resides in the cytoplasm. The catalysed reaction is glycyl-[formate C-acetyltransferase] + reduced [flavodoxin] + S-adenosyl-L-methionine = glycin-2-yl radical-[formate C-acetyltransferase] + semiquinone [flavodoxin] + 5'-deoxyadenosine + L-methionine + H(+). In terms of biological role, activation of pyruvate formate-lyase under anaerobic conditions by generation of an organic free radical, using S-adenosylmethionine and reduced flavodoxin as cosubstrates to produce 5'-deoxy-adenosine. The chain is Pyruvate formate-lyase-activating enzyme (pflA) from Staphylococcus epidermidis (strain ATCC 12228 / FDA PCI 1200).